Reading from the N-terminus, the 543-residue chain is Light-independent protochlorophyllide reductase subunit B (543 aa).

Aspartate 36 serves as a coordination point for [4Fe-4S] cluster. The Proton donor role is filled by aspartate 287. Position 422–423 (422–423 (GL)) interacts with substrate.

Belongs to the ChlB/BchB/BchZ family. Protochlorophyllide reductase is composed of three subunits; BchL, BchN and BchB. Forms a heterotetramer of two BchB and two BchN subunits. [4Fe-4S] cluster is required as a cofactor.

It carries out the reaction chlorophyllide a + oxidized 2[4Fe-4S]-[ferredoxin] + 2 ADP + 2 phosphate = protochlorophyllide a + reduced 2[4Fe-4S]-[ferredoxin] + 2 ATP + 2 H2O. Its pathway is porphyrin-containing compound metabolism; bacteriochlorophyll biosynthesis (light-independent). In terms of biological role, component of the dark-operative protochlorophyllide reductase (DPOR) that uses Mg-ATP and reduced ferredoxin to reduce ring D of protochlorophyllide (Pchlide) to form chlorophyllide a (Chlide). This reaction is light-independent. The NB-protein (BchN-BchB) is the catalytic component of the complex. In Rubrivivax gelatinosus (strain NBRC 100245 / IL144), this protein is Light-independent protochlorophyllide reductase subunit B.